A 288-amino-acid polypeptide reads, in one-letter code: ATP synthase gamma chain (288 aa).

It belongs to the ATPase gamma chain family. As to quaternary structure, F-type ATPases have 2 components, CF(1) - the catalytic core - and CF(0) - the membrane proton channel. CF(1) has five subunits: alpha(3), beta(3), gamma(1), delta(1), epsilon(1). CF(0) has three main subunits: a, b and c.

It is found in the cell inner membrane. Produces ATP from ADP in the presence of a proton gradient across the membrane. The gamma chain is believed to be important in regulating ATPase activity and the flow of protons through the CF(0) complex. The protein is ATP synthase gamma chain of Legionella pneumophila (strain Corby).